The chain runs to 160 residues: Phosphopantetheine adenylyltransferase (160 aa).

Ser10 lines the substrate pocket. ATP contacts are provided by residues Ser10–Phe11 and His18. Substrate is bound by residues Lys42, Thr74, and Arg88. ATP-binding positions include Gly89–Arg91, Glu99, and Phe124–Arg130.

It belongs to the bacterial CoaD family. In terms of assembly, homohexamer. The cofactor is Mg(2+).

It localises to the cytoplasm. The enzyme catalyses (R)-4'-phosphopantetheine + ATP + H(+) = 3'-dephospho-CoA + diphosphate. It functions in the pathway cofactor biosynthesis; coenzyme A biosynthesis; CoA from (R)-pantothenate: step 4/5. Functionally, reversibly transfers an adenylyl group from ATP to 4'-phosphopantetheine, yielding dephospho-CoA (dPCoA) and pyrophosphate. The polypeptide is Phosphopantetheine adenylyltransferase (Bdellovibrio bacteriovorus (strain ATCC 15356 / DSM 50701 / NCIMB 9529 / HD100)).